Here is a 351-residue protein sequence, read N- to C-terminus: S-adenosylmethionine:tRNA ribosyltransferase-isomerase (351 aa).

It belongs to the QueA family. As to quaternary structure, monomer.

The protein localises to the cytoplasm. The enzyme catalyses 7-aminomethyl-7-carbaguanosine(34) in tRNA + S-adenosyl-L-methionine = epoxyqueuosine(34) in tRNA + adenine + L-methionine + 2 H(+). Its pathway is tRNA modification; tRNA-queuosine biosynthesis. Functionally, transfers and isomerizes the ribose moiety from AdoMet to the 7-aminomethyl group of 7-deazaguanine (preQ1-tRNA) to give epoxyqueuosine (oQ-tRNA). This chain is S-adenosylmethionine:tRNA ribosyltransferase-isomerase, found in Hyphomonas neptunium (strain ATCC 15444).